Reading from the N-terminus, the 152-residue chain is Protein SprT-like (152 aa).

A SprT-like domain is found at 6–151 (LQQLVCRISL…SKCLGKLELL (146 aa)). H67 is a binding site for Zn(2+). E68 is an active-site residue. Residue H71 coordinates Zn(2+).

The protein belongs to the SprT family. The cofactor is Zn(2+).

It localises to the cytoplasm. The chain is Protein SprT-like from Lysinibacillus sphaericus (strain C3-41).